Reading from the N-terminus, the 31-residue chain is Cytochrome b6-f complex subunit 6 (31 aa).

Residues 4-24 (ILTYFGILFGILTITVIIFVA) form a helical membrane-spanning segment.

The protein belongs to the PetL family. The 4 large subunits of the cytochrome b6-f complex are cytochrome b6, subunit IV (17 kDa polypeptide, PetD), cytochrome f and the Rieske protein, while the 4 small subunits are PetG, PetL, PetM and PetN. The complex functions as a dimer.

The protein resides in the plastid. It localises to the chloroplast thylakoid membrane. In terms of biological role, component of the cytochrome b6-f complex, which mediates electron transfer between photosystem II (PSII) and photosystem I (PSI), cyclic electron flow around PSI, and state transitions. PetL is important for photoautotrophic growth as well as for electron transfer efficiency and stability of the cytochrome b6-f complex. The chain is Cytochrome b6-f complex subunit 6 from Chaetosphaeridium globosum (Charophycean green alga).